Consider the following 197-residue polypeptide: Ribonuclease HII (197 aa).

Positions 9–197 (KLIAGVDEVG…APVKKALEQF (189 aa)) constitute an RNase H type-2 domain. The a divalent metal cation site is built by D15, E16, and D107.

Belongs to the RNase HII family. It depends on Mn(2+) as a cofactor. Mg(2+) is required as a cofactor.

The protein localises to the cytoplasm. It catalyses the reaction Endonucleolytic cleavage to 5'-phosphomonoester.. In terms of biological role, endonuclease that specifically degrades the RNA of RNA-DNA hybrids. The protein is Ribonuclease HII of Haemophilus influenzae (strain PittEE).